A 283-amino-acid polypeptide reads, in one-letter code: Thymidylate synthase (283 aa).

Position 22 (Arg22) interacts with dUMP. Cys160 acts as the Nucleophile in catalysis. DUMP-binding positions include Arg180 to Asp183, Asn191, and His221 to Tyr223. Asp183 provides a ligand contact to (6R)-5,10-methylene-5,6,7,8-tetrahydrofolate. Ala282 serves as a coordination point for (6R)-5,10-methylene-5,6,7,8-tetrahydrofolate.

The protein belongs to the thymidylate synthase family. Bacterial-type ThyA subfamily. In terms of assembly, homodimer.

It localises to the cytoplasm. The catalysed reaction is dUMP + (6R)-5,10-methylene-5,6,7,8-tetrahydrofolate = 7,8-dihydrofolate + dTMP. The protein operates within pyrimidine metabolism; dTTP biosynthesis. Its function is as follows. Catalyzes the reductive methylation of 2'-deoxyuridine-5'-monophosphate (dUMP) to 2'-deoxythymidine-5'-monophosphate (dTMP) while utilizing 5,10-methylenetetrahydrofolate (mTHF) as the methyl donor and reductant in the reaction, yielding dihydrofolate (DHF) as a by-product. This enzymatic reaction provides an intracellular de novo source of dTMP, an essential precursor for DNA biosynthesis. The polypeptide is Thymidylate synthase (Colwellia psychrerythraea (strain 34H / ATCC BAA-681) (Vibrio psychroerythus)).